The sequence spans 340 residues: Glyceraldehyde-3-phosphate dehydrogenase (340 aa).

Residues 11–12 (TI) and Gly109 contribute to the NAD(+) site. D-glyceraldehyde 3-phosphate is bound at residue 138–140 (SCN). Cys139 (nucleophile) is an active-site residue. NAD(+) is bound at residue Arg167. A D-glyceraldehyde 3-phosphate-binding site is contributed by 193–194 (HA). An NAD(+)-binding site is contributed by Gln300.

This sequence belongs to the glyceraldehyde-3-phosphate dehydrogenase family. As to quaternary structure, homotetramer.

Its subcellular location is the cytoplasm. The catalysed reaction is D-glyceraldehyde 3-phosphate + phosphate + NADP(+) = (2R)-3-phospho-glyceroyl phosphate + NADPH + H(+). The enzyme catalyses D-glyceraldehyde 3-phosphate + phosphate + NAD(+) = (2R)-3-phospho-glyceroyl phosphate + NADH + H(+). It participates in carbohydrate degradation; glycolysis; pyruvate from D-glyceraldehyde 3-phosphate: step 1/5. This is Glyceraldehyde-3-phosphate dehydrogenase from Metallosphaera sedula (strain ATCC 51363 / DSM 5348 / JCM 9185 / NBRC 15509 / TH2).